The following is a 191-amino-acid chain: Large ribosomal subunit protein bL9 (191 aa).

This sequence belongs to the bacterial ribosomal protein bL9 family.

Its function is as follows. Binds to the 23S rRNA. This is Large ribosomal subunit protein bL9 from Granulibacter bethesdensis (strain ATCC BAA-1260 / CGDNIH1).